Here is a 360-residue protein sequence, read N- to C-terminus: Type 2 DNA topoisomerase 6 subunit A (360 aa).

The Topo IIA-type catalytic domain occupies 3 to 140 (EIERRCLRAL…FHIRPEEDGA (138 aa)). Tyrosine 97 (O-(5'-phospho-DNA)-tyrosine intermediate) is an active-site residue. Positions 193 and 245 each coordinate Mg(2+).

It belongs to the TOP6A family. As to quaternary structure, homodimer. Heterotetramer of two Top6A and two Top6B chains. The cofactor is Mg(2+).

It carries out the reaction ATP-dependent breakage, passage and rejoining of double-stranded DNA.. In terms of biological role, relaxes both positive and negative superturns and exhibits a strong decatenase activity. This chain is Type 2 DNA topoisomerase 6 subunit A, found in Archaeoglobus fulgidus (strain ATCC 49558 / DSM 4304 / JCM 9628 / NBRC 100126 / VC-16).